Here is a 117-residue protein sequence, read N- to C-terminus: Immunoglobulin heavy variable 1-58 (117 aa).

The first 19 residues, 1-19, serve as a signal peptide directing secretion; that stretch reads MDWIWRILFLVGAATGAHS. The tract at residues 20 to 44 is framework-1; it reads QMQLVQSGPEVKKPGTSVKVSCKAS. The Ig-like domain occupies 20-117; it reads QMQLVQSGPE…EDTAVYYCAA (98 aa). Residues Cys41 and Cys115 are joined by a disulfide bond. The segment at 45 to 52 is complementarity-determining-1; sequence GFTFTSSA. The tract at residues 53–69 is framework-2; sequence VQWVRQARGQRLEWIGW. Residues 70–77 are complementarity-determining-2; the sequence is IVVGSGNT. A framework-3 region spans residues 78–115; it reads NYAQKFQERVTITRDMSTSTAYMELSSLRSEDTAVYYC. The segment at 116 to 117 is complementarity-determining-3; it reads AA.

Immunoglobulins are composed of two identical heavy chains and two identical light chains; disulfide-linked.

It is found in the secreted. The protein localises to the cell membrane. Functionally, v region of the variable domain of immunoglobulin heavy chains that participates in the antigen recognition. Immunoglobulins, also known as antibodies, are membrane-bound or secreted glycoproteins produced by B lymphocytes. In the recognition phase of humoral immunity, the membrane-bound immunoglobulins serve as receptors which, upon binding of a specific antigen, trigger the clonal expansion and differentiation of B lymphocytes into immunoglobulins-secreting plasma cells. Secreted immunoglobulins mediate the effector phase of humoral immunity, which results in the elimination of bound antigens. The antigen binding site is formed by the variable domain of one heavy chain, together with that of its associated light chain. Thus, each immunoglobulin has two antigen binding sites with remarkable affinity for a particular antigen. The variable domains are assembled by a process called V-(D)-J rearrangement and can then be subjected to somatic hypermutations which, after exposure to antigen and selection, allow affinity maturation for a particular antigen. The sequence is that of Immunoglobulin heavy variable 1-58 from Homo sapiens (Human).